Reading from the N-terminus, the 290-residue chain is 33 kDa chaperonin (290 aa).

2 disulfide bridges follow: Cys235–Cys237 and Cys268–Cys271.

The protein belongs to the HSP33 family. Under oxidizing conditions two disulfide bonds are formed involving the reactive cysteines. Under reducing conditions zinc is bound to the reactive cysteines and the protein is inactive.

The protein localises to the cytoplasm. Redox regulated molecular chaperone. Protects both thermally unfolding and oxidatively damaged proteins from irreversible aggregation. Plays an important role in the bacterial defense system toward oxidative stress. This is 33 kDa chaperonin from Streptococcus pyogenes serotype M1.